Consider the following 149-residue polypeptide: Macrodomain Ter protein (149 aa).

It belongs to the MatP family. Homodimer.

The protein localises to the cytoplasm. Required for spatial organization of the terminus region of the chromosome (Ter macrodomain) during the cell cycle. Prevents early segregation of duplicated Ter macrodomains during cell division. Binds specifically to matS, which is a 13 bp signature motif repeated within the Ter macrodomain. The protein is Macrodomain Ter protein of Vibrio cholerae serotype O1 (strain ATCC 39315 / El Tor Inaba N16961).